Consider the following 647-residue polypeptide: MSCGDSGIRRILRASKRFRSTKGASKARRDQMNSEIRNLRALLPISPEHRLSYLHSMSITCTYIRKSVELRGVCEESTVFSAVNGCVPQDCALQDCALQECVLQECVLQECVLQECVLQALPGFIVAFTTDGKLLYVSENVHEYLGLSMVDVLQSDSFFDMLDRSDVEAVRSVLADASPSGERWVVCRMLVSKAMRLRSSCCPLLVRIRLRDGVCVSLCRPTADRLPARNADFHTHHSADMRLASASSSVLFHLGFSADELIGRSWYELLHPDDLRHAADRHAAILAAATADAEMLIRVQCKDLSWVWMYTHASATAERDAISCSNYMISEAEAVYLQQRLSSSSSSSSSSSSSSASPQCSSVSDSSDAHSAHTLFCTPPYSPTSSQCSDFLSEGYGSLEALVDSAFCSPPYPPLFPNPCCTPTVCPPDTALDPARLCPPDSALVPAALCPPDAALDPTQLCPPGAALDPTLLCPPGAALDPTQLCLPDGALVPAVFCPPNGALVPARLCPSDAALVPAALGRPDAALVPVCRPLQVCECPLDGAVPLEDLSMFPLPQGGGSRLMPPEASPTTHTHFSYDAAQQAGIGTLAMQIHTLICSFDAYSAARHTHSHHTSCWAPEPLLDEGIIDSILRELDSTHTDAHTLI.

A basic motif; degenerate region spans residues 16 to 29 (KRFRSTKGASKARR). The region spanning 16–67 (KRFRSTKGASKARRDQMNSEIRNLRALLPISPEHRLSYLHSMSITCTYIRKS) is the bHLH domain. Residues 30–67 (DQMNSEIRNLRALLPISPEHRLSYLHSMSITCTYIRKS) form a helix-loop-helix motif region. PAS domains are found at residues 117-181 (VLQA…SPSG) and 238-274 (SADM…HPDD).

Heterodimer; efficient DNA binding requires dimerization with another bHLH protein. Specifically expressed in endothelial and hematopoietic precursor cells.

It is found in the nucleus. Functionally, transcription factor specifically expressed in endothelial and hematopoietic precursor cells that acts as a key regulator of the endothelial differentiation cascade. Acts as an early-response transcription factor that regulates the expression of early regulators of endothelial and haematopoietic differentiation, such as etv2 and tal1. This chain is Neuronal PAS domain-containing protein 4-like, found in Danio rerio (Zebrafish).